The primary structure comprises 328 residues: Biotin synthase (328 aa).

The Radical SAM core domain occupies F51–R282. [4Fe-4S] cluster contacts are provided by C69, C73, and C76. 4 residues coordinate [2Fe-2S] cluster: C112, C147, C207, and R277.

This sequence belongs to the radical SAM superfamily. Biotin synthase family. Homodimer. Requires [4Fe-4S] cluster as cofactor. The cofactor is [2Fe-2S] cluster.

The enzyme catalyses (4R,5S)-dethiobiotin + (sulfur carrier)-SH + 2 reduced [2Fe-2S]-[ferredoxin] + 2 S-adenosyl-L-methionine = (sulfur carrier)-H + biotin + 2 5'-deoxyadenosine + 2 L-methionine + 2 oxidized [2Fe-2S]-[ferredoxin]. It functions in the pathway cofactor biosynthesis; biotin biosynthesis; biotin from 7,8-diaminononanoate: step 2/2. Catalyzes the conversion of dethiobiotin (DTB) to biotin by the insertion of a sulfur atom into dethiobiotin via a radical-based mechanism. The chain is Biotin synthase from Clostridium acetobutylicum (strain ATCC 824 / DSM 792 / JCM 1419 / IAM 19013 / LMG 5710 / NBRC 13948 / NRRL B-527 / VKM B-1787 / 2291 / W).